A 569-amino-acid polypeptide reads, in one-letter code: Aspartokinase 1, chloroplastic (569 aa).

A chloroplast-targeting transit peptide spans 1 to 90 (MAATRVRCCH…VDEKGITCVM (90 aa)). Positions 91, 94, and 123 each coordinate ATP. Residue Glu-207 participates in substrate binding. 2 ACT domains span residues 405-483 (IAST…AIIS) and 484-560 (LIGN…GNGS). L-lysine-binding residues include Gln-413 and Gly-415. Ser-430 is a binding site for S-adenosyl-L-methionine. L-lysine contacts are provided by Val-431, Asp-432, and Ser-437. S-adenosyl-L-methionine contacts are provided by Ser-452 and Arg-453.

It belongs to the aspartokinase family. Homodimer.

Its subcellular location is the plastid. It is found in the chloroplast. It catalyses the reaction L-aspartate + ATP = 4-phospho-L-aspartate + ADP. It participates in amino-acid biosynthesis; L-lysine biosynthesis via DAP pathway; (S)-tetrahydrodipicolinate from L-aspartate: step 1/4. The protein operates within amino-acid biosynthesis; L-methionine biosynthesis via de novo pathway; L-homoserine from L-aspartate: step 1/3. It functions in the pathway amino-acid biosynthesis; L-threonine biosynthesis; L-threonine from L-aspartate: step 1/5. Its activity is regulated as follows. Inhibited by S-adenosyl-L-methionine (SAM) and lysine in a synergistic manner. No inhibition by threonine, leucine or SAM alone, and no activation or inhibition by alanine, cysteine, isoleucine, serine, valine, methionine, glutamine, asparagine, glutamic acid or arginine. Involved in the first step of essential amino acids lysine, threonine, methionine and isoleucine synthesis via the aspartate-family pathway. This Arabidopsis thaliana (Mouse-ear cress) protein is Aspartokinase 1, chloroplastic (AK1).